The sequence spans 117 residues: Large ribosomal subunit protein bL20 (117 aa).

The protein belongs to the bacterial ribosomal protein bL20 family.

In terms of biological role, binds directly to 23S ribosomal RNA and is necessary for the in vitro assembly process of the 50S ribosomal subunit. It is not involved in the protein synthesizing functions of that subunit. The protein is Large ribosomal subunit protein bL20 of Carboxydothermus hydrogenoformans (strain ATCC BAA-161 / DSM 6008 / Z-2901).